The primary structure comprises 277 residues: WRKY transcription factor 68 (277 aa).

A disordered region spans residues 51 to 96 (TPLMHFPTTPNSSSSEAVNGDDEEEEDGEEQQHKTKKRFKFTKMSR). A compositionally biased stretch (polar residues) spans 58–67 (TTPNSSSSEA). Acidic residues predominate over residues 69–79 (NGDDEEEEDGE). A compositionally biased stretch (basic residues) spans 84 to 96 (KTKKRFKFTKMSR). Residues 112–177 (SEVLHLDDGY…YEGQHTHPRP (66 aa)) constitute a DNA-binding region (WRKY). The disordered stretch occupies residues 183 to 206 (KEGSSPSNGSASRAHIGLPTLPPQ).

It belongs to the WRKY group II-c family.

It localises to the nucleus. Its function is as follows. Transcription factor. Interacts specifically with the W box (5'-(T)TGAC[CT]-3'), a frequently occurring elicitor-responsive cis-acting element. In Arabidopsis thaliana (Mouse-ear cress), this protein is WRKY transcription factor 68 (WRKY68).